Consider the following 129-residue polypeptide: Glycine cleavage system H protein (129 aa).

The Lipoyl-binding domain occupies 24 to 106 (SYTVGITEHA…YGEGWFFRVM (83 aa)). Residue lysine 65 is modified to N6-lipoyllysine.

The protein belongs to the GcvH family. The glycine cleavage system is composed of four proteins: P, T, L and H. It depends on (R)-lipoate as a cofactor.

Functionally, the glycine cleavage system catalyzes the degradation of glycine. The H protein shuttles the methylamine group of glycine from the P protein to the T protein. The polypeptide is Glycine cleavage system H protein (Shewanella sp. (strain MR-7)).